The primary structure comprises 600 residues: 69 kDa paraflagellar rod protein (600 aa).

Residues 335 to 355 (DKQDEAWRRIQELERVLQRLG) form a calmodulin-binding region.

In terms of assembly, heterodimer of a 69 kDa and a 73 kDa protein.

The protein localises to the cell projection. It is found in the cilium. Its subcellular location is the flagellum. The protein resides in the cytoplasm. It localises to the cytoskeleton. Functionally, major component of the paraflagellar rod (PFR). The PFR is a highly ordered lattices of fibrous proteins that are located inside the flagellum and assume a fixed orientation with respect to the microtubular axoneme. This is 69 kDa paraflagellar rod protein (PFRA) from Trypanosoma brucei brucei.